The sequence spans 522 residues: ATP synthase subunit alpha (522 aa).

Position 176-183 (176-183) interacts with ATP; the sequence is GDRQTGKT.

This sequence belongs to the ATPase alpha/beta chains family. F-type ATPases have 2 components, CF(1) - the catalytic core - and CF(0) - the membrane proton channel. CF(1) has five subunits: alpha(3), beta(3), gamma(1), delta(1), epsilon(1). CF(0) has four main subunits: a, b, b' and c.

It is found in the cell membrane. It carries out the reaction ATP + H2O + 4 H(+)(in) = ADP + phosphate + 5 H(+)(out). Produces ATP from ADP in the presence of a proton gradient across the membrane. The alpha chain is a regulatory subunit. The polypeptide is ATP synthase subunit alpha (Chloroflexus aggregans (strain MD-66 / DSM 9485)).